Reading from the N-terminus, the 500-residue chain is MLDSTRIFMKAFHLLLFDGSLIFPECILIFGLILLLMIDSTSDQKDIPWFYFISSTSLVMSITALLFRWREEPMISFSGNFQTNHFNEIFQFLILLCSTLSIPLSVEYIECTEMAITEFLLFILTATLGGMFLCGANDFITIFVAPECFSLCSYLLSGYTKKDVRSNEATMKYLLMGGASSSILVHAFSWLYGSSGGEIELQEIVNGLINTQMYNSPGISIALIFITVGIGFKLSPAPSHQWTPDVYEGSPTPVVAFLSVTSKVAASASATRIFDIPFYFSSNEWHLLLEILAILSMILGNLIAITQTSMKRMLAYSSIGQIGYVIIGIIVGDSNGGYASMITYMLFYISMNLGTFACIVLFGLRTGTDNIRDYAGLYTKDPFLALSLALCLLSLGGLPPLAGFFGKLHLFWCGWQAGLSFLVSIGLLTSVLSIYYYLKIIKLLMTGRNQEITPHVRNYKRSPLRSKNSIELSMIVCVIASTIPGISMNPIIAIAQDTLF.

Transmembrane regions (helical) follow at residues 14–34 (LLLF…GLIL), 47–67 (IPWF…ALLF), 89–109 (IFQF…VEYI), 114–134 (MAIT…MFLC), 139–159 (FITI…LSGY), 173–193 (YLLM…WLYG), 217–237 (PGIS…LSPA), 285–305 (WHLL…LIAI), 313–333 (MLAY…IVGD), 344–364 (YMLF…LFGL), 385–405 (ALSL…AGFF), 408–428 (LHLF…IGLL), and 474–494 (MIVC…IIAI).

Belongs to the complex I subunit 2 family. NDH is composed of at least 16 different subunits, 5 of which are encoded in the nucleus.

It localises to the plastid. The protein resides in the chloroplast thylakoid membrane. The enzyme catalyses a plastoquinone + NADH + (n+1) H(+)(in) = a plastoquinol + NAD(+) + n H(+)(out). It carries out the reaction a plastoquinone + NADPH + (n+1) H(+)(in) = a plastoquinol + NADP(+) + n H(+)(out). Its function is as follows. NDH shuttles electrons from NAD(P)H:plastoquinone, via FMN and iron-sulfur (Fe-S) centers, to quinones in the photosynthetic chain and possibly in a chloroplast respiratory chain. The immediate electron acceptor for the enzyme in this species is believed to be plastoquinone. Couples the redox reaction to proton translocation, and thus conserves the redox energy in a proton gradient. This is NAD(P)H-quinone oxidoreductase subunit 2 A, chloroplastic from Pelargonium hortorum (Common geranium).